The sequence spans 538 residues: Carboxypeptidase 2 (538 aa).

The first 21 residues, 1–21, serve as a signal peptide directing secretion; sequence MVAYRFLTLISLGLGSHCASA. Residue N46 is glycosylated (N-linked (GlcNAc...) asparagine). The disordered stretch occupies residues 53-76; it reads PAFTSPGTVPRGFSDGTSGPTRDE. In terms of domain architecture, Peptidase M14 spans 71 to 351; sequence GPTRDETMEG…VMVKSILQTA (281 aa). 3 residues coordinate Zn(2+): H136, E139, and H224. E322 serves as the catalytic Proton donor/acceptor. Residues N393 and N459 are each glycosylated (N-linked (GlcNAc...) asparagine).

Belongs to the peptidase M14 family. Zn(2+) is required as a cofactor.

Its subcellular location is the secreted. Functionally, extracellular metalloprotease that contributes to pathogenicity. The polypeptide is Carboxypeptidase 2 (MCPB) (Trichophyton equinum (Horse ringworm fungus)).